The following is a 180-amino-acid chain: Large ribosomal subunit protein uL6 (180 aa).

The protein belongs to the universal ribosomal protein uL6 family. In terms of assembly, part of the 50S ribosomal subunit.

In terms of biological role, this protein binds to the 23S rRNA, and is important in its secondary structure. It is located near the subunit interface in the base of the L7/L12 stalk, and near the tRNA binding site of the peptidyltransferase center. This is Large ribosomal subunit protein uL6 from Clostridium botulinum (strain Okra / Type B1).